The following is a 347-amino-acid chain: Quinolinate synthase (347 aa).

Positions 47 and 68 each coordinate iminosuccinate. Residue cysteine 113 participates in [4Fe-4S] cluster binding. Iminosuccinate is bound by residues 139 to 141 (YAN) and serine 156. Cysteine 200 contributes to the [4Fe-4S] cluster binding site. Iminosuccinate-binding positions include 226 to 228 (HPE) and threonine 243. Residue cysteine 297 participates in [4Fe-4S] cluster binding.

It belongs to the quinolinate synthase family. Type 1 subfamily. It depends on [4Fe-4S] cluster as a cofactor.

It is found in the cytoplasm. It catalyses the reaction iminosuccinate + dihydroxyacetone phosphate = quinolinate + phosphate + 2 H2O + H(+). Its pathway is cofactor biosynthesis; NAD(+) biosynthesis; quinolinate from iminoaspartate: step 1/1. Catalyzes the condensation of iminoaspartate with dihydroxyacetone phosphate to form quinolinate. The chain is Quinolinate synthase from Shigella boydii serotype 18 (strain CDC 3083-94 / BS512).